The primary structure comprises 75 residues: U6-lycotoxin-Ls1e (75 aa).

The signal sequence occupies residues Met1–Ala21. The propeptide occupies Glu22 to Arg25.

Belongs to the neurotoxin 19 (CSTX) family. 06 (U6-Lctx) subfamily. Post-translationally, contains 4 disulfide bonds. Expressed by the venom gland.

The protein localises to the secreted. In Lycosa singoriensis (Wolf spider), this protein is U6-lycotoxin-Ls1e.